The primary structure comprises 405 residues: Cysteine desulfurase IscS (405 aa).

Asn-156 serves as a coordination point for pyridoxal 5'-phosphate. N6-(pyridoxal phosphate)lysine is present on Lys-207. The active-site Cysteine persulfide intermediate is Cys-329. Cys-329 lines the [2Fe-2S] cluster pocket.

Belongs to the class-V pyridoxal-phosphate-dependent aminotransferase family. NifS/IscS subfamily. Homodimer. Forms a heterotetramer with IscU, interacts with other sulfur acceptors. The cofactor is pyridoxal 5'-phosphate.

The protein localises to the cytoplasm. The catalysed reaction is (sulfur carrier)-H + L-cysteine = (sulfur carrier)-SH + L-alanine. The protein operates within cofactor biosynthesis; iron-sulfur cluster biosynthesis. Master enzyme that delivers sulfur to a number of partners involved in Fe-S cluster assembly, tRNA modification or cofactor biosynthesis. Catalyzes the removal of elemental sulfur atoms from cysteine to produce alanine. Functions as a sulfur delivery protein for Fe-S cluster synthesis onto IscU, an Fe-S scaffold assembly protein, as well as other S acceptor proteins. This chain is Cysteine desulfurase IscS, found in Dechloromonas aromatica (strain RCB).